A 935-amino-acid polypeptide reads, in one-letter code: Isoleucine--tRNA ligase (935 aa).

A 'HIGH' region motif is present at residues 58–68 (PYANGNLHLGH). An L-isoleucyl-5'-AMP-binding site is contributed by glutamate 559. Positions 600–604 (KMSKS) match the 'KMSKS' region motif. Residue lysine 603 participates in ATP binding. Residues cysteine 898, cysteine 901, cysteine 918, and cysteine 921 each coordinate Zn(2+).

This sequence belongs to the class-I aminoacyl-tRNA synthetase family. IleS type 1 subfamily. Monomer. Requires Zn(2+) as cofactor.

The protein resides in the cytoplasm. The catalysed reaction is tRNA(Ile) + L-isoleucine + ATP = L-isoleucyl-tRNA(Ile) + AMP + diphosphate. Functionally, catalyzes the attachment of isoleucine to tRNA(Ile). As IleRS can inadvertently accommodate and process structurally similar amino acids such as valine, to avoid such errors it has two additional distinct tRNA(Ile)-dependent editing activities. One activity is designated as 'pretransfer' editing and involves the hydrolysis of activated Val-AMP. The other activity is designated 'posttransfer' editing and involves deacylation of mischarged Val-tRNA(Ile). This Haemophilus ducreyi (strain 35000HP / ATCC 700724) protein is Isoleucine--tRNA ligase.